The chain runs to 403 residues: Phospholipase A1-II 2 (403 aa).

Residue serine 218 is the Acyl-ester intermediate of the active site. Active-site charge relay system residues include serine 218, aspartate 286, and histidine 323. Residues 381 to 403 form a disordered region; the sequence is GPDGRWVLQDHEPDDDDDDDDDD. Positions 392–403 are enriched in acidic residues; it reads EPDDDDDDDDDD.

It belongs to the AB hydrolase superfamily. Lipase family.

Its subcellular location is the cytoplasm. Acylhydrolase that catalyzes the hydrolysis of phospholipids at the sn-1 position. This is Phospholipase A1-II 2 from Oryza sativa subsp. indica (Rice).